Consider the following 689-residue polypeptide: Acetyl-coenzyme A synthetase 2-like, mitochondrial (689 aa).

The transit peptide at 1–37 (MAARTLGRGVGRLLGSLRGLSGQPARPPCGVSAPRRA) directs the protein to the mitochondrion. The disordered stretch occupies residues 17-46 (LRGLSGQPARPPCGVSAPRRAASGPSGSAP). Residues 32 to 46 (SAPRRAASGPSGSAP) are compositionally biased toward low complexity. Residues 224 to 227 (RGGR) and T341 contribute to the CoA site. Residue K396 is modified to N6-acetyllysine. Residues 417–419 (GEP), 441–446 (DTWWQT), D533, and R548 contribute to the ATP site. Residue S556 participates in CoA binding. An ATP-binding site is contributed by R559. At K642 the chain carries N6-acetyllysine.

This sequence belongs to the ATP-dependent AMP-binding enzyme family. As to quaternary structure, interacts with SIRT3. Reversibly acetylated on Lys-642. The acetyl-CoA synthase activity is inhibited by acetylation and activated by deacetylation mediated by the deacetylase SIRT3.

It is found in the mitochondrion matrix. It catalyses the reaction acetate + ATP + CoA = acetyl-CoA + AMP + diphosphate. It carries out the reaction propanoate + ATP + CoA = propanoyl-CoA + AMP + diphosphate. Inhibited by acetylation at Lys-642 and activated by deacetylation mediated by the deacetylase SIRT3. Functionally, catalyzes the synthesis of acetyl-CoA from short-chain fatty acids. Acetate is the preferred substrate. Can also utilize propionate with a much lower affinity. Provides acetyl-CoA that is utilized mainly for oxidation under ketogenic conditions. Involved in thermogenesis under ketogenic conditions, using acetate as a vital fuel when carbohydrate availability is insufficient. The chain is Acetyl-coenzyme A synthetase 2-like, mitochondrial (ACSS1) from Homo sapiens (Human).